The following is a 440-amino-acid chain: Asparagine--tRNA ligase (440 aa).

Belongs to the class-II aminoacyl-tRNA synthetase family. As to quaternary structure, homodimer.

The protein resides in the cytoplasm. The enzyme catalyses tRNA(Asn) + L-asparagine + ATP = L-asparaginyl-tRNA(Asn) + AMP + diphosphate + H(+). This Roseiflexus castenholzii (strain DSM 13941 / HLO8) protein is Asparagine--tRNA ligase.